The primary structure comprises 82 residues: Small ribosomal subunit protein bS16 (82 aa).

This sequence belongs to the bacterial ribosomal protein bS16 family.

This is Small ribosomal subunit protein bS16 from Aeromonas hydrophila subsp. hydrophila (strain ATCC 7966 / DSM 30187 / BCRC 13018 / CCUG 14551 / JCM 1027 / KCTC 2358 / NCIMB 9240 / NCTC 8049).